Here is a 438-residue protein sequence, read N- to C-terminus: Enolase (438 aa).

Substrate contacts are provided by H159 and E168. The active-site Proton donor is E211. The Mg(2+) site is built by D246, E297, and D322. 2 residues coordinate substrate: E297 and D322. K347 serves as the catalytic Proton acceptor. Substrate-binding positions include 374 to 377 and K398; that span reads SHRS.

This sequence belongs to the enolase family. In terms of assembly, homodimer. Requires Mg(2+) as cofactor.

It is found in the cytoplasm. It catalyses the reaction (2R)-2-phosphoglycerate = phosphoenolpyruvate + H2O. Its pathway is carbohydrate degradation; glycolysis; pyruvate from D-glyceraldehyde 3-phosphate: step 4/5. This is Enolase (enoA) from Aspergillus fumigatus (strain ATCC MYA-4609 / CBS 101355 / FGSC A1100 / Af293) (Neosartorya fumigata).